We begin with the raw amino-acid sequence, 228 residues long: Gliolectin (228 aa).

Over 1–120 (MLCPPMALGP…NPKAVSQAPR (120 aa)) the chain is Cytoplasmic. The chain crosses the membrane as a helical; Signal-anchor for type II membrane protein span at residues 121 to 137 (GMALTPAQISASAKLIL). Topologically, residues 138-228 (QKCPESDRKK…GTSELADQKQ (91 aa)) are extracellular. The interval 141-228 (PESDRKKSNG…GTSELADQKQ (88 aa)) is disordered. 6 N-linked (GlcNAc...) asparagine glycosylation sites follow: asparagine 149, asparagine 156, asparagine 198, asparagine 199, asparagine 205, and asparagine 218. A compositionally biased stretch (low complexity) spans 195–213 (NNNNNSSSSNNNSNMNINN). Residues 218–228 (NGTSELADQKQ) are compositionally biased toward polar residues.

Expressed by a subset of glial cells found at the midline of the embryo stage 12 nervous system. Expression is highest during the formation of the embryonic axonal commissures, a process requiring midline glial cell function (at protein level).

The protein localises to the membrane. Its function is as follows. Has a role in intercellular carbohydrate-mediated cell adhesion. The protein is Gliolectin of Drosophila melanogaster (Fruit fly).